The chain runs to 343 residues: Methionine import ATP-binding protein MetN 1 (343 aa).

An ABC transporter domain is found at 2 to 241 (IKLTHISKVF…PKTPLAQQFI (240 aa)). 38–45 (GASGAGKS) lines the ATP pocket.

It belongs to the ABC transporter superfamily. Methionine importer (TC 3.A.1.24) family. As to quaternary structure, the complex is composed of two ATP-binding proteins (MetN), two transmembrane proteins (MetI) and a solute-binding protein (MetQ).

The protein resides in the cell inner membrane. The catalysed reaction is L-methionine(out) + ATP + H2O = L-methionine(in) + ADP + phosphate + H(+). It carries out the reaction D-methionine(out) + ATP + H2O = D-methionine(in) + ADP + phosphate + H(+). Its function is as follows. Part of the ABC transporter complex MetNIQ involved in methionine import. Responsible for energy coupling to the transport system. This is Methionine import ATP-binding protein MetN 1 from Yersinia pestis bv. Antiqua (strain Antiqua).